A 640-amino-acid chain; its full sequence is Threonine--tRNA ligase (640 aa).

In terms of domain architecture, TGS spans M1–T61. A catalytic region spans residues D242–P533. Zn(2+) contacts are provided by C333, H384, and H510.

Belongs to the class-II aminoacyl-tRNA synthetase family. In terms of assembly, homodimer. The cofactor is Zn(2+).

The protein resides in the cytoplasm. It carries out the reaction tRNA(Thr) + L-threonine + ATP = L-threonyl-tRNA(Thr) + AMP + diphosphate + H(+). In terms of biological role, catalyzes the attachment of threonine to tRNA(Thr) in a two-step reaction: L-threonine is first activated by ATP to form Thr-AMP and then transferred to the acceptor end of tRNA(Thr). Also edits incorrectly charged L-seryl-tRNA(Thr). In Pseudomonas fluorescens (strain Pf0-1), this protein is Threonine--tRNA ligase.